The following is a 235-amino-acid chain: Large ribosomal subunit protein uL1 (235 aa).

This sequence belongs to the universal ribosomal protein uL1 family. As to quaternary structure, part of the 50S ribosomal subunit.

Functionally, binds directly to 23S rRNA. The L1 stalk is quite mobile in the ribosome, and is involved in E site tRNA release. In terms of biological role, protein L1 is also a translational repressor protein, it controls the translation of the L11 operon by binding to its mRNA. This chain is Large ribosomal subunit protein uL1, found in Mycobacterium bovis (strain ATCC BAA-935 / AF2122/97).